Here is a 142-residue protein sequence, read N- to C-terminus: Alpha-lactalbumin (142 aa).

A signal peptide spans 1 to 18 (MMSFVSLLLVGILFHATQ). The C-type lysozyme domain occupies 20–142 (EQLTKCEVFR…KLDQWLCEKL (123 aa)). 4 disulfides stabilise this stretch: Cys-25–Cys-139, Cys-47–Cys-130, Cys-80–Cys-96, and Cys-92–Cys-110. Asn-64 and Asn-93 each carry an N-linked (GlcNAc...) asparagine glycan. Residues Lys-98, Asp-101, Asp-103, Asp-106, and Asp-107 each contribute to the Ca(2+) site.

This sequence belongs to the glycosyl hydrolase 22 family. As to quaternary structure, lactose synthase (LS) is a heterodimer of a catalytic component, beta1,4-galactosyltransferase (beta4Gal-T1) and a regulatory component, alpha-lactalbumin (LA). As to expression, mammary gland specific. Secreted in milk.

It is found in the secreted. Its function is as follows. Regulatory subunit of lactose synthase, changes the substrate specificity of galactosyltransferase in the mammary gland making glucose a good acceptor substrate for this enzyme. This enables LS to synthesize lactose, the major carbohydrate component of milk. In other tissues, galactosyltransferase transfers galactose onto the N-acetylglucosamine of the oligosaccharide chains in glycoproteins. This is Alpha-lactalbumin (LALBA) from Bubalus bubalis (Domestic water buffalo).